We begin with the raw amino-acid sequence, 424 residues long: MLDIKLFANDLEGVKKSLASRNPALLTLVGEITELNKTYKELLTSVENMRAKRNELSKSVGILKQKDPAAAEEAMKEVSLIKTGMSEKENMLEEIKKKISNTMLNIPNMPDPSVTIGKDEKDNKEIRKDGAAPSFSFKPLDHHAVGEKLGILDFETAAVLSGSRFALLKGDGARLERALISYMLDKHAKKGYTEVVPPSIVNEEILIGTGQLPKFREDMYALEGEPKQFLISTAEIPLTNMNRGKVLQEAELPVKLTAGTPCFRKEAGTYGKDTRGLIRNHQFDKVELVMISNSNDSFNLLEAMTADAEDVLKGLGLAYRTVELCTGDMGFSSAKTYDIEVWMPSENKYREISSCSNCTSFQARRMNLRYKNAEGKIEFVHTLNGSGVAVGRALAAILENYQQEDGSVIVPEALRPYFGKDIIK.

233–235 (TAE) serves as a coordination point for L-serine. 264 to 266 (RKE) serves as a coordination point for ATP. Glu-287 contributes to the L-serine binding site. 351-354 (EISS) lines the ATP pocket. Ser-386 serves as a coordination point for L-serine.

Belongs to the class-II aminoacyl-tRNA synthetase family. Type-1 seryl-tRNA synthetase subfamily. In terms of assembly, homodimer. The tRNA molecule binds across the dimer.

It is found in the cytoplasm. It catalyses the reaction tRNA(Ser) + L-serine + ATP = L-seryl-tRNA(Ser) + AMP + diphosphate + H(+). It carries out the reaction tRNA(Sec) + L-serine + ATP = L-seryl-tRNA(Sec) + AMP + diphosphate + H(+). The protein operates within aminoacyl-tRNA biosynthesis; selenocysteinyl-tRNA(Sec) biosynthesis; L-seryl-tRNA(Sec) from L-serine and tRNA(Sec): step 1/1. Functionally, catalyzes the attachment of serine to tRNA(Ser). Is also able to aminoacylate tRNA(Sec) with serine, to form the misacylated tRNA L-seryl-tRNA(Sec), which will be further converted into selenocysteinyl-tRNA(Sec). The protein is Serine--tRNA ligase of Elusimicrobium minutum (strain Pei191).